Here is a 67-residue protein sequence, read N- to C-terminus: Large ribosomal subunit protein bL35 (67 aa).

The protein belongs to the bacterial ribosomal protein bL35 family.

In Dehalococcoides mccartyi (strain ATCC BAA-2100 / JCM 16839 / KCTC 5957 / BAV1), this protein is Large ribosomal subunit protein bL35.